Reading from the N-terminus, the 130-residue chain is Ribonuclease VapC4 (130 aa).

The PINc domain maps to 7 to 130; the sequence is LADTSVFIGI…AMPDVEVITI (124 aa). Mg(2+) contacts are provided by Asp9 and Asp98.

This sequence belongs to the PINc/VapC protein family. Interacts with cognate antitoxin VapB4. Mg(2+) serves as cofactor.

It is found in the secreted. Functionally, toxic component of a type II toxin-antitoxin (TA) system. Probably exerts its toxic effect by binding to mRNA, inhibiting translation. Binds to, recognizes and cleaves ssRNA at ACGC and AC(A/U)GC sequences, usually between the G and C; cleavage is not very efficient, nor is cleavage required to inhibit protein synthesis. Upon expression in situ, in M.smegmatis or E.coli inhibits cell growth and colony formation; in at least E.coli also causes increased levels of cellular RNA. Its toxic effect is neutralized by coexpression with cognate antitoxin VapB4. This Mycobacterium tuberculosis (strain ATCC 25618 / H37Rv) protein is Ribonuclease VapC4.